Here is a 156-residue protein sequence, read N- to C-terminus: Phosphopantetheine adenylyltransferase (156 aa).

Thr9 provides a ligand contact to substrate. Residues 9 to 10 and His17 each bind ATP; that span reads TF. Residues Lys41, Leu73, and Arg87 each coordinate substrate. ATP is bound by residues 88-90, Glu98, and 123-129; these read GVR and WAFVSST.

Belongs to the bacterial CoaD family. In terms of assembly, homohexamer. Requires Mg(2+) as cofactor.

Its subcellular location is the cytoplasm. It carries out the reaction (R)-4'-phosphopantetheine + ATP + H(+) = 3'-dephospho-CoA + diphosphate. Its pathway is cofactor biosynthesis; coenzyme A biosynthesis; CoA from (R)-pantothenate: step 4/5. Its function is as follows. Reversibly transfers an adenylyl group from ATP to 4'-phosphopantetheine, yielding dephospho-CoA (dPCoA) and pyrophosphate. The sequence is that of Phosphopantetheine adenylyltransferase from Haemophilus influenzae (strain 86-028NP).